The chain runs to 125 residues: Phosphoribosyl-AMP cyclohydrolase (125 aa).

Aspartate 80 is a Mg(2+) binding site. Cysteine 81 contributes to the Zn(2+) binding site. Mg(2+) is bound by residues aspartate 82 and aspartate 84. Positions 97 and 104 each coordinate Zn(2+).

Belongs to the PRA-CH family. As to quaternary structure, homodimer. The cofactor is Mg(2+). It depends on Zn(2+) as a cofactor.

It localises to the cytoplasm. It catalyses the reaction 1-(5-phospho-beta-D-ribosyl)-5'-AMP + H2O = 1-(5-phospho-beta-D-ribosyl)-5-[(5-phospho-beta-D-ribosylamino)methylideneamino]imidazole-4-carboxamide. It participates in amino-acid biosynthesis; L-histidine biosynthesis; L-histidine from 5-phospho-alpha-D-ribose 1-diphosphate: step 3/9. Functionally, catalyzes the hydrolysis of the adenine ring of phosphoribosyl-AMP. This is Phosphoribosyl-AMP cyclohydrolase from Leifsonia xyli subsp. xyli (strain CTCB07).